Reading from the N-terminus, the 66-residue chain is Large ribosomal subunit protein bL35 (66 aa).

Composition is skewed to basic residues over residues 1-16 (MPKM…RVKR) and 38-49 (TKQKRQLRKARL). The tract at residues 1–49 (MPKMKTHRGAAKRVKRTASGQLKRSRAFTSHLFANKSTKQKRQLRKARL) is disordered.

It belongs to the bacterial ribosomal protein bL35 family.

The sequence is that of Large ribosomal subunit protein bL35 from Staphylococcus aureus (strain MSSA476).